The chain runs to 510 residues: Conditioned medium factor receptor 1 (510 aa).

Residues Met1–Lys36 are Cytoplasmic-facing. The helical transmembrane segment at Tyr37–Val55 threads the bilayer. Over Lys56–Asp510 the chain is Extracellular.

It is found in the membrane. Functionally, receptor for cmfA, that appears to mediate the G-independent cmfA signal transduction. The polypeptide is Conditioned medium factor receptor 1 (cmfB) (Dictyostelium discoideum (Social amoeba)).